A 72-amino-acid chain; its full sequence is Translation initiation factor IF-1 (72 aa).

Residues 1-72 (MSKEEVLEFS…TKGRITYRYK (72 aa)) enclose the S1-like domain.

This sequence belongs to the IF-1 family. In terms of assembly, component of the 30S ribosomal translation pre-initiation complex which assembles on the 30S ribosome in the order IF-2 and IF-3, IF-1 and N-formylmethionyl-tRNA(fMet); mRNA recruitment can occur at any time during PIC assembly.

The protein localises to the cytoplasm. One of the essential components for the initiation of protein synthesis. Stabilizes the binding of IF-2 and IF-3 on the 30S subunit to which N-formylmethionyl-tRNA(fMet) subsequently binds. Helps modulate mRNA selection, yielding the 30S pre-initiation complex (PIC). Upon addition of the 50S ribosomal subunit IF-1, IF-2 and IF-3 are released leaving the mature 70S translation initiation complex. This chain is Translation initiation factor IF-1, found in Bartonella tribocorum (strain CIP 105476 / IBS 506).